A 753-amino-acid chain; its full sequence is Taperin (753 aa).

A disordered region spans residues 141 to 348 (FDSPAAPRRR…IRPSSKPDME (208 aa)). The span at 182 to 197 (PAPPVLPSQPAPPISP) shows a compositional bias: pro residues. 2 stretches are compositionally biased toward polar residues: residues 230–239 (LQKTGSNSFT) and 250–263 (VNRSLSNGPMTQES). Serine 274 is modified (phosphoserine). Positions 300–322 (TPSATPVGPPAFLAPSPASATPS) are enriched in low complexity. A compositionally biased stretch (polar residues) spans 323-335 (QRQWVSSATSAND). Residues 337-347 (FEIRPSSKPDM) are compositionally biased toward basic and acidic residues. 3 positions are modified to phosphoserine: serine 402, serine 458, and serine 502. Residues 438–488 (GCPRPAISDTDKSVRRQRPASPPPFLPATTEAEPAEGLGVPGLTKNGQEPV) are disordered. Disordered regions lie at residues 544-583 (FTVVPKRKPGTLQEPHLSQTNGQFQQGAEEQDADSLSGPH) and 637-676 (FEYPSESSLAQEEAEEEEEEEEEEEGEDGEEEEVGPDSEK). Residues 559-571 (HLSQTNGQFQQGA) are compositionally biased toward polar residues. The segment covering 648 to 672 (EEAEEEEEEEEEEEGEDGEEEEVGP) has biased composition (acidic residues).

This sequence belongs to the taperin family. Interacts with GRXCR2; the interaction restricts TPRN to the stereocilum basal region. Interacts with actin ACTB; the interaction may stabilize stereocilia. Interacts with CLIC5. Interacts with PTPRQ. TPRN, CLIC5 and PTPQR form concentric rings at the base of stereocilia and may form a complex. Interacts with phosphatase PPP1CA; the interaction results in inhibition of PPC1A phosphatase activity. Interacts with DNA damage response proteins XRCC6/KU70, XRCC5/KU80, PARP1, TOP1 and TOP2A; these interactions recruit TPRN to sites of DNA damage where it may play a role in DNA repair.

It is found in the cell projection. Its subcellular location is the stereocilium. The protein localises to the microvillus. The protein resides in the nucleus. It localises to the nucleoplasm. It is found in the cytoplasm. Functionally, essential for hearing. Required for maintenance of stereocilia on both inner and outer hair cells. Necessary for the integrity of the stereociliary rootlet. May act as an actin cytoskeleton regulator involved in the regulation of actin dynamics at the pointed end in hair cells. Forms rings at the base of stereocilia and binds actin filaments in the stereocilia which may stabilize the stereocilia. Acts as a strong inhibitor of PPP1CA phosphatase activity. Recruited to sites of DNA damage and may play a role in DNA damage repair. This Rattus norvegicus (Rat) protein is Taperin (Tprn).